Consider the following 467-residue polypeptide: Methylenetetrahydrofolate--tRNA-(uracil-5-)-methyltransferase TrmFO (467 aa).

Residue 11–16 coordinates FAD; that stretch reads GAGLAG.

The protein belongs to the MnmG family. TrmFO subfamily. Requires FAD as cofactor.

The protein localises to the cytoplasm. It catalyses the reaction uridine(54) in tRNA + (6R)-5,10-methylene-5,6,7,8-tetrahydrofolate + NADH + H(+) = 5-methyluridine(54) in tRNA + (6S)-5,6,7,8-tetrahydrofolate + NAD(+). The enzyme catalyses uridine(54) in tRNA + (6R)-5,10-methylene-5,6,7,8-tetrahydrofolate + NADPH + H(+) = 5-methyluridine(54) in tRNA + (6S)-5,6,7,8-tetrahydrofolate + NADP(+). Its function is as follows. Catalyzes the folate-dependent formation of 5-methyl-uridine at position 54 (M-5-U54) in all tRNAs. This chain is Methylenetetrahydrofolate--tRNA-(uracil-5-)-methyltransferase TrmFO, found in Prochlorococcus marinus (strain NATL1A).